Consider the following 167-residue polypeptide: uncharacterized protein (167 aa).

The N-terminal stretch at 1-25 is a signal peptide; it reads MPFSVTKFSLIFVALLLAEALVAQS.

This is an uncharacterized protein from Caenorhabditis elegans.